We begin with the raw amino-acid sequence, 120 residues long: Basic phospholipase A2 homolog LmutTX (120 aa).

7 cysteine pairs are disulfide-bonded: Cys-26–Cys-114, Cys-28–Cys-44, Cys-43–Cys-95, Cys-49–Cys-120, Cys-50–Cys-88, Cys-57–Cys-81, and Cys-75–Cys-86.

Belongs to the phospholipase A2 family. Group II subfamily. K49 sub-subfamily. Monomer. As to expression, expressed by the venom gland.

Its subcellular location is the secreted. In terms of biological role, snake venom phospholipase A2 homolog that lacks enzymatic activity. Shows moderate cytotoxicity against C2C12 myotubes (activity above 200 ug/mL). Also shows antibacterial activity against both Gram-positive and Gram-negative bacteria. A model of myotoxic mechanism has been proposed: an apo Lys49-PLA2 is activated by the entrance of a hydrophobic molecule (e.g. fatty acid) at the hydrophobic channel of the protein leading to a reorientation of a monomer. This reorientation causes a transition between 'inactive' to 'active' states, causing alignment of C-terminal and membrane-docking sites (MDoS) side-by-side and putting the membrane-disruption sites (MDiS) in the same plane, exposed to solvent and in a symmetric position for both monomers. The MDoS region stabilizes the toxin on membrane by the interaction of charged residues with phospholipid head groups. Subsequently, the MDiS region destabilizes the membrane with penetration of hydrophobic residues. This insertion causes a disorganization of the membrane, allowing an uncontrolled influx of ions (i.e. calcium and sodium), and eventually triggering irreversible intracellular alterations and cell death. The sequence is that of Basic phospholipase A2 homolog LmutTX from Lachesis muta muta (Bushmaster).